Reading from the N-terminus, the 307-residue chain is UDP-3-O-acyl-N-acetylglucosamine deacetylase (307 aa).

Zn(2+) contacts are provided by H78, H241, and D245. H268 functions as the Proton donor in the catalytic mechanism.

It belongs to the LpxC family. Zn(2+) serves as cofactor.

The catalysed reaction is a UDP-3-O-[(3R)-3-hydroxyacyl]-N-acetyl-alpha-D-glucosamine + H2O = a UDP-3-O-[(3R)-3-hydroxyacyl]-alpha-D-glucosamine + acetate. It functions in the pathway glycolipid biosynthesis; lipid IV(A) biosynthesis; lipid IV(A) from (3R)-3-hydroxytetradecanoyl-[acyl-carrier-protein] and UDP-N-acetyl-alpha-D-glucosamine: step 2/6. Functionally, catalyzes the hydrolysis of UDP-3-O-myristoyl-N-acetylglucosamine to form UDP-3-O-myristoylglucosamine and acetate, the committed step in lipid A biosynthesis. The sequence is that of UDP-3-O-acyl-N-acetylglucosamine deacetylase from Acidovorax ebreus (strain TPSY) (Diaphorobacter sp. (strain TPSY)).